Reading from the N-terminus, the 225-residue chain is Cardiotrophin-like cytokine factor 1 (225 aa).

Positions 1-27 are cleaved as a signal peptide; it reads MDLRAGDSWGMLACLCTVLWHLPAVPA. Asn-29 carries an N-linked (GlcNAc...) asparagine glycan.

This sequence belongs to the IL-6 superfamily. In terms of assembly, forms a heteromeric complex with cardiotrophin-like cytokine CRLF1/CLF-1; the CRLF1-CLCF1 complex is a ligand for the ciliary neurotrophic factor receptor/CNTFR. The CRLF1-CLCF1 heterodimer binds SORL1 (via N-terminal ectodomain); within this complex, the interaction is mediated predominantly by the CRLF1 moiety. The tripartite signaling complex formed by CRLF1, CLCF1 and CNTFR also binds SORL1. As to expression, expressed predominantly in lymph nodes, spleen, peripheral blood lymphocytes, bone marrow, and fetal liver.

Its subcellular location is the secreted. In terms of biological role, in complex with CRLF1, forms a heterodimeric neurotropic cytokine that plays a crucial role during neuronal development. Also stimulates B-cells. Binds to and activates the ILST/gp130 receptor. The polypeptide is Cardiotrophin-like cytokine factor 1 (CLCF1) (Homo sapiens (Human)).